Consider the following 238-residue polypeptide: Uridylate kinase (238 aa).

ATP is bound at residue 11–14; the sequence is KLSG. Glycine 52 provides a ligand contact to UMP. The ATP site is built by glycine 53 and arginine 57. Residues aspartate 72 and 134 to 141 each bind UMP; that span reads TGFSYFTT. The ATP site is built by asparagine 162, tyrosine 168, and aspartate 171.

It belongs to the UMP kinase family. In terms of assembly, homohexamer.

The protein localises to the cytoplasm. It carries out the reaction UMP + ATP = UDP + ADP. It participates in pyrimidine metabolism; CTP biosynthesis via de novo pathway; UDP from UMP (UMPK route): step 1/1. With respect to regulation, inhibited by UTP. Catalyzes the reversible phosphorylation of UMP to UDP. The chain is Uridylate kinase from Mesoplasma florum (strain ATCC 33453 / NBRC 100688 / NCTC 11704 / L1) (Acholeplasma florum).